A 101-amino-acid polypeptide reads, in one-letter code: Histone H1-like protein EM6 (101 aa).

Composition is skewed to basic residues over residues 1 to 35 (AKKR…HVRK) and 58 to 101 (AKKK…RRRR). Residues 1-101 (AKKRSRSRKR…SRTARSRRRR (101 aa)) are disordered. Repeat copies occupy residues 3–4 (KR), 5–6 (SR), 7–8 (SR), and 9–10 (KR). The tract at residues 3-22 (KRSRSRKRSASRKRSRSRKR) is 10 X 2 AA approximate tandem repeats of [SK]-R. Residues 11-12 (SA) form a 5; approximate repeat. 5 consecutive repeat copies span residues 13 to 14 (SR), 15 to 16 (KR), 17 to 18 (SR), 19 to 20 (SR), and 21 to 22 (KR). Positions 32–65 (HVRKALAAGMKNHLLAHPKGSNNFILAKKKAPRR) are globular.

Sperm.

The protein resides in the nucleus. It localises to the chromosome. In Ensis minor (Razor shell), this protein is Histone H1-like protein EM6.